The primary structure comprises 214 residues: Ribosomal RNA small subunit methyltransferase G (214 aa).

S-adenosyl-L-methionine is bound by residues Gly58, 109-110, and Arg126; that span reads AE.

It belongs to the methyltransferase superfamily. RNA methyltransferase RsmG family.

It is found in the cytoplasm. In terms of biological role, specifically methylates the N7 position of a guanine in 16S rRNA. This is Ribosomal RNA small subunit methyltransferase G from Ureaplasma parvum serovar 3 (strain ATCC 700970).